The chain runs to 93 residues: M-zodatoxin-Lt5a (93 aa).

Residues 1–22 (MKYCVVILALLVALVCITESRS) form the signal peptide. Residues 23-64 (TETGYAVAETLEDNDLDELQAYLEEIAEASEMEDFSNIEEAR) constitute a propeptide that is removed on maturation. A Processing quadruplet motif motif is present at residues 61 to 64 (EEAR). Leu-92 is subject to Leucine amide.

Cleavage of the propeptide depends on the processing quadruplet motif (XXXR, with at least one of X being E). In terms of tissue distribution, expressed by the venom gland.

It is found in the secreted. In terms of biological role, has antimicrobial activity against. Gram-positive bacteria (A.globiformis VKM Ac-1112 (MIC=1.1 uM), and B.subtilis VKM B-501 (MIC=0.6 uM)), Gram-negative bacteria (E.coli DH5-alpha (MIC=0.6 uM), E.coli MH1 (MIC=0.6 uM), and P.aeruginosa PAO1 (MIC=18 uM)), and yeasts (P.pastoris GS115 (MIC&gt;37 uM), and S.cerevisiae Y190 (MIC&gt;37 uM)). Also has a moderate hemolytic activity against rabbit erythrocytes. Causes paralysis, but is not lethal when injected into insect (M.domestica) larvae. This is M-zodatoxin-Lt5a from Lachesana tarabaevi (Spider).